The following is a 315-amino-acid chain: 4-diphosphocytidyl-2-C-methyl-D-erythritol kinase (315 aa).

Residue lysine 26 is part of the active site. 111 to 121 (PLAGGLAGGSA) lines the ATP pocket. Aspartate 153 is a catalytic residue.

This sequence belongs to the GHMP kinase family. IspE subfamily.

It carries out the reaction 4-CDP-2-C-methyl-D-erythritol + ATP = 4-CDP-2-C-methyl-D-erythritol 2-phosphate + ADP + H(+). Its pathway is isoprenoid biosynthesis; isopentenyl diphosphate biosynthesis via DXP pathway; isopentenyl diphosphate from 1-deoxy-D-xylulose 5-phosphate: step 3/6. Functionally, catalyzes the phosphorylation of the position 2 hydroxy group of 4-diphosphocytidyl-2C-methyl-D-erythritol. The polypeptide is 4-diphosphocytidyl-2-C-methyl-D-erythritol kinase (Salinispora tropica (strain ATCC BAA-916 / DSM 44818 / JCM 13857 / NBRC 105044 / CNB-440)).